Reading from the N-terminus, the 219-residue chain is RING finger protein nenya (219 aa).

The segment at 6-48 (CNKCFRRRNVEPTLIFHMTQCQHVLCASCLSESSTDKKCPLCK) adopts an RING-type zinc-finger fold. Residues 161-181 (NQARGLRPRTPSVTTSDNTQS) form a disordered region.

As to quaternary structure, may interact with itself, with narya and vilya through its RING-type zinc finger.

In terms of biological role, required for the formation of DNA double-strand breaks together with narya and vilya during the meiotic recombination process. Plays a redundant role with narya in chromosome segregation during female meiosis. The protein is RING finger protein nenya of Drosophila melanogaster (Fruit fly).